A 219-amino-acid polypeptide reads, in one-letter code: Thiamine-phosphate synthase (219 aa).

4-amino-2-methyl-5-(diphosphooxymethyl)pyrimidine contacts are provided by residues 44–48 (QFREK) and asparagine 79. Mg(2+)-binding residues include aspartate 80 and aspartate 99. Residue serine 117 coordinates 4-amino-2-methyl-5-(diphosphooxymethyl)pyrimidine. Position 143–145 (143–145 (TST)) interacts with 2-[(2R,5Z)-2-carboxy-4-methylthiazol-5(2H)-ylidene]ethyl phosphate. Lysine 146 lines the 4-amino-2-methyl-5-(diphosphooxymethyl)pyrimidine pocket. Residues glycine 175 and 195 to 196 (IS) contribute to the 2-[(2R,5Z)-2-carboxy-4-methylthiazol-5(2H)-ylidene]ethyl phosphate site.

This sequence belongs to the thiamine-phosphate synthase family. The cofactor is Mg(2+).

The catalysed reaction is 2-[(2R,5Z)-2-carboxy-4-methylthiazol-5(2H)-ylidene]ethyl phosphate + 4-amino-2-methyl-5-(diphosphooxymethyl)pyrimidine + 2 H(+) = thiamine phosphate + CO2 + diphosphate. It catalyses the reaction 2-(2-carboxy-4-methylthiazol-5-yl)ethyl phosphate + 4-amino-2-methyl-5-(diphosphooxymethyl)pyrimidine + 2 H(+) = thiamine phosphate + CO2 + diphosphate. The enzyme catalyses 4-methyl-5-(2-phosphooxyethyl)-thiazole + 4-amino-2-methyl-5-(diphosphooxymethyl)pyrimidine + H(+) = thiamine phosphate + diphosphate. The protein operates within cofactor biosynthesis; thiamine diphosphate biosynthesis; thiamine phosphate from 4-amino-2-methyl-5-diphosphomethylpyrimidine and 4-methyl-5-(2-phosphoethyl)-thiazole: step 1/1. In terms of biological role, condenses 4-methyl-5-(beta-hydroxyethyl)thiazole monophosphate (THZ-P) and 2-methyl-4-amino-5-hydroxymethyl pyrimidine pyrophosphate (HMP-PP) to form thiamine monophosphate (TMP). The polypeptide is Thiamine-phosphate synthase (Bacillus cereus (strain AH820)).